We begin with the raw amino-acid sequence, 1194 residues long: DNA polymerase catalytic subunit (1194 aa).

The protein belongs to the DNA polymerase type-B family. As to quaternary structure, forms a complex with the ssDNA-binding protein, the DNA polymerase processivity factor, and the alkaline exonuclease. Interacts with the helicase-primase complex composed of the primase, the helicase and the primase-associated factor; this interaction may coordinate leading and lagging strand DNA synthesis at the replication fork.

It localises to the host nucleus. It catalyses the reaction DNA(n) + a 2'-deoxyribonucleoside 5'-triphosphate = DNA(n+1) + diphosphate. The catalysed reaction is Endonucleolytic cleavage to 5'-phosphomonoester.. Replicates viral genomic DNA. The replication complex is composed of six viral proteins: the DNA polymerase, processivity factor, primase, primase-associated factor, helicase, and ssDNA-binding protein. Additionally, the polymerase contains an intrinsic ribonuclease H (RNase H) activity that specifically degrades RNA/DNA heteroduplexes or duplex DNA substrates in the 5' to 3' direction. Therefore, it can catalyze the excision of the RNA primers that initiate the synthesis of Okazaki fragments at a replication fork during viral DNA replication. This chain is DNA polymerase catalytic subunit, found in Varicella-zoster virus (strain Oka vaccine) (HHV-3).